Consider the following 258-residue polypeptide: Imidazole glycerol phosphate synthase subunit HisF (258 aa).

Catalysis depends on residues aspartate 11 and aspartate 130.

This sequence belongs to the HisA/HisF family. Heterodimer of HisH and HisF.

The protein localises to the cytoplasm. The enzyme catalyses 5-[(5-phospho-1-deoxy-D-ribulos-1-ylimino)methylamino]-1-(5-phospho-beta-D-ribosyl)imidazole-4-carboxamide + L-glutamine = D-erythro-1-(imidazol-4-yl)glycerol 3-phosphate + 5-amino-1-(5-phospho-beta-D-ribosyl)imidazole-4-carboxamide + L-glutamate + H(+). Its pathway is amino-acid biosynthesis; L-histidine biosynthesis; L-histidine from 5-phospho-alpha-D-ribose 1-diphosphate: step 5/9. Functionally, IGPS catalyzes the conversion of PRFAR and glutamine to IGP, AICAR and glutamate. The HisF subunit catalyzes the cyclization activity that produces IGP and AICAR from PRFAR using the ammonia provided by the HisH subunit. In Xanthomonas axonopodis pv. citri (strain 306), this protein is Imidazole glycerol phosphate synthase subunit HisF.